The following is a 362-amino-acid chain: Phosphoserine aminotransferase (362 aa).

Residue R43 participates in L-glutamate binding. Pyridoxal 5'-phosphate-binding positions include 77 to 78, W103, T153, D173, and Q196; that span reads AT. K197 carries the post-translational modification N6-(pyridoxal phosphate)lysine. Pyridoxal 5'-phosphate is bound at residue 238–239; that stretch reads NT.

Belongs to the class-V pyridoxal-phosphate-dependent aminotransferase family. SerC subfamily. In terms of assembly, homodimer. Pyridoxal 5'-phosphate serves as cofactor.

It localises to the cytoplasm. The catalysed reaction is O-phospho-L-serine + 2-oxoglutarate = 3-phosphooxypyruvate + L-glutamate. The enzyme catalyses 4-(phosphooxy)-L-threonine + 2-oxoglutarate = (R)-3-hydroxy-2-oxo-4-phosphooxybutanoate + L-glutamate. It functions in the pathway amino-acid biosynthesis; L-serine biosynthesis; L-serine from 3-phospho-D-glycerate: step 2/3. Its pathway is cofactor biosynthesis; pyridoxine 5'-phosphate biosynthesis; pyridoxine 5'-phosphate from D-erythrose 4-phosphate: step 3/5. In terms of biological role, catalyzes the reversible conversion of 3-phosphohydroxypyruvate to phosphoserine and of 3-hydroxy-2-oxo-4-phosphonooxybutanoate to phosphohydroxythreonine. The protein is Phosphoserine aminotransferase of Xylella fastidiosa (strain Temecula1 / ATCC 700964).